A 362-amino-acid chain; its full sequence is Severin (362 aa).

Residues 53 to 102 (FKVVPVPESSYGKFYDGDSYIILHTFKEGNSLKHDIHFFLGTFTTQDEAG) form a Gelsolin-like 1 repeat. 162–170 (RLLHISGDK) contributes to the a 1,2-diacyl-sn-glycero-3-phospho-(1D-myo-inositol-4,5-bisphosphate) binding site. 2 Gelsolin-like repeats span residues 172-212 (AKVA…QEKN) and 280-323 (LKFS…NEKK).

Belongs to the villin/gelsolin family.

Functionally, severin blocks the ends of F-actin and causes the fragmentation and depolymerization of actin filaments in a Ca(2+) dependent manner. This is Severin (sevA) from Dictyostelium discoideum (Social amoeba).